Reading from the N-terminus, the 211-residue chain is Protein TMA23 (211 aa).

Residues 115 to 211 (ASFVVSSASS…SARRDRKEHI (97 aa)) are disordered. Over residues 116–125 (SFVVSSASSS) the composition is skewed to low complexity. Composition is skewed to basic residues over residues 140–149 (VKRKKLKKDK), 158–176 (KKKK…KKSK), and 185–197 (SKHK…KKHK). Residues 198 to 211 (KEESSARRDRKEHI) are compositionally biased toward basic and acidic residues.

In terms of assembly, forms homooligomers. Associates with ribosomal complexes.

It is found in the nucleus. It localises to the nucleolus. Its function is as follows. Trans-acting factors of the ribosome biogenesis process. The protein is Protein TMA23 (TMA23) of Saccharomyces cerevisiae (strain ATCC 204508 / S288c) (Baker's yeast).